The chain runs to 128 residues: Cyclin-dependent protein kinase inhibitor SMR1 (128 aa).

Residues 17–74 (PIKIRSKTSKTKKDEGDDDEDDLRCSTPTSQEHKIPAVVDSPPPPPRKPRPPPSAPSA) form a disordered region. Residues 57–71 (SPPPPPRKPRPPPSA) show a composition bias toward pro residues.

In terms of assembly, interacts with CDKB1-1. Interacts with CPR5. In terms of tissue distribution, expressed in roots, leaves, stems, siliques and flowers. Expressed in the root elongation zone.

It is found in the nucleus. In terms of biological role, probable cyclin-dependent protein kinase (CDK) inhibitor that functions as a repressor of mitosis in the endoreduplication cell cycle. Cooperates with SIM and SMR2 to promote endoreplication during leaf development. Specifically regulates endoreduplication in epidermal pavement cells to produce the cell size pattern. Is necessary for giant cell formation. Positive regulator of effector-triggered immunity (ETI). In Arabidopsis thaliana (Mouse-ear cress), this protein is Cyclin-dependent protein kinase inhibitor SMR1.